We begin with the raw amino-acid sequence, 484 residues long: tRNA sulfurtransferase (484 aa).

The THUMP domain maps to 63–167 (REMIERLTCT…LDRLFVIHRQ (105 aa)). Residues 185–186 (LM), Lys267, Gly289, and Gln298 each bind ATP. Cys346 and Cys457 are oxidised to a cystine. The Rhodanese domain maps to 405 to 483 (VLPGQIVIDI…GHTNVRVYRP (79 aa)). The active-site Cysteine persulfide intermediate is Cys457.

It belongs to the ThiI family.

Its subcellular location is the cytoplasm. It carries out the reaction [ThiI sulfur-carrier protein]-S-sulfanyl-L-cysteine + a uridine in tRNA + 2 reduced [2Fe-2S]-[ferredoxin] + ATP + H(+) = [ThiI sulfur-carrier protein]-L-cysteine + a 4-thiouridine in tRNA + 2 oxidized [2Fe-2S]-[ferredoxin] + AMP + diphosphate. The enzyme catalyses [ThiS sulfur-carrier protein]-C-terminal Gly-Gly-AMP + S-sulfanyl-L-cysteinyl-[cysteine desulfurase] + AH2 = [ThiS sulfur-carrier protein]-C-terminal-Gly-aminoethanethioate + L-cysteinyl-[cysteine desulfurase] + A + AMP + 2 H(+). It functions in the pathway cofactor biosynthesis; thiamine diphosphate biosynthesis. Its function is as follows. Catalyzes the ATP-dependent transfer of a sulfur to tRNA to produce 4-thiouridine in position 8 of tRNAs, which functions as a near-UV photosensor. Also catalyzes the transfer of sulfur to the sulfur carrier protein ThiS, forming ThiS-thiocarboxylate. This is a step in the synthesis of thiazole, in the thiamine biosynthesis pathway. The sulfur is donated as persulfide by IscS. This Pseudomonas aeruginosa (strain LESB58) protein is tRNA sulfurtransferase.